The primary structure comprises 94 residues: Core protein OPG142 (94 aa).

The protein belongs to the orthopoxvirus OPG142 family. In terms of assembly, part of a complex composed of the kinase OPG054, OPG092, OPG100, OPG114, OPG115, OPG142 and OPG157.

Its subcellular location is the host cytoplasm. It localises to the virion. Functionally, late protein which is a part of a large complex required for early virion morphogenesis. This complex participates in the formation of virosomes and the incorporation of virosomal contents into nascent immature virions. Required for the stability and kinase activity of OPG054. This chain is Core protein OPG142 (OPG142), found in Cynomys gunnisoni (Gunnison's prairie dog).